Reading from the N-terminus, the 393-residue chain is Lipoyl synthase, mitochondrial (393 aa).

Residues Cys111, Cys116, Cys122, Cys142, Cys146, Cys149, and Ser357 each coordinate [4Fe-4S] cluster. A Radical SAM core domain is found at 127–346 (EHGTQTATIM…ETRGNELGFL (220 aa)).

Belongs to the radical SAM superfamily. Lipoyl synthase family. [4Fe-4S] cluster is required as a cofactor.

The protein localises to the mitochondrion. It carries out the reaction [[Fe-S] cluster scaffold protein carrying a second [4Fe-4S](2+) cluster] + N(6)-octanoyl-L-lysyl-[protein] + 2 oxidized [2Fe-2S]-[ferredoxin] + 2 S-adenosyl-L-methionine + 4 H(+) = [[Fe-S] cluster scaffold protein] + N(6)-[(R)-dihydrolipoyl]-L-lysyl-[protein] + 4 Fe(3+) + 2 hydrogen sulfide + 2 5'-deoxyadenosine + 2 L-methionine + 2 reduced [2Fe-2S]-[ferredoxin]. It participates in protein modification; protein lipoylation via endogenous pathway; protein N(6)-(lipoyl)lysine from octanoyl-[acyl-carrier-protein]: step 2/2. Functionally, catalyzes the radical-mediated insertion of two sulfur atoms into the C-6 and C-8 positions of the octanoyl moiety bound to the lipoyl domains of lipoate-dependent enzymes, thereby converting the octanoylated domains into lipoylated derivatives. This is Lipoyl synthase, mitochondrial from Aedes aegypti (Yellowfever mosquito).